The chain runs to 621 residues: SH2B adapter protein 2 (621 aa).

Tyr-47 bears the Phosphotyrosine mark. A Phosphoserine modification is found at Ser-130. The segment at 144–165 is disordered; that stretch reads RASPEPEGGATPKTTEPVSEPR. The PH domain maps to 186–299; it reads DIQREGALRF…WVADIQGCVD (114 aa). Residue Ser-303 is modified to Phosphoserine. An SH2 domain is found at 409–507; sequence WFHGTLSRVK…SADITLRSYV (99 aa). 2 disordered regions span residues 507-528 and 548-609; these read VRAQ…PVPA and PPTS…ATLG. Positions 552–570 are enriched in low complexity; that stretch reads PSNGAGASSSSGSSSSATS. At Ser-597 the chain carries Phosphoserine. A Phosphotyrosine modification is found at Tyr-618.

It belongs to the SH2B adapter family. As to quaternary structure, homodimer. Interacts with KIT/c-KIT, SHC1, EPOR, PDGFR, VAV1 and VAV3. Interacts (via N-terminal region) with SHC1. Interacts (via the phosphorylated C-terminus) with GRB2. Interacts (via its SH2 domain) with EPOR, INSR and KIT. Interacts with GRB2 after B-cell antigen receptor stimulation. Interacts (via PH domain) with VAV3. Interacts with NTRK1, NTRK2 and NTRK3 (phosphorylated); after stimulation of the receptor by its extracellular ligand and subsequent autophosphorylation of the receptor. Binds INSR, GRB2, ASB6 and CAP. Insulin stimulation leads to dissociation of CAP. Binds CBS only when SH2B2/APS has become phosphorylated. INSR binding does not depend on the phosphorylation of SH2B2/APS. In terms of processing, phosphorylated on a tyrosine residue by NTRK1, NTRK2, NTRK3 and INSR after stimulation of the receptor by its extracellular ligand. Tyrosine phosphorylated by JAK2, KIT and other kinases activated by B-cell receptor in response to stimulation with cytokines, IL3, IL5, PDGF, IGF1, IGF2, CSF2/GM-CSF and cross-linking of the B-cell receptor complex. Detected in embryonic brain, spinal cord and cortical neurons.

It localises to the cytoplasm. It is found in the membrane. In terms of biological role, adapter protein for several members of the tyrosine kinase receptor family. Involved in multiple signaling pathways. Binds to EPOR and suppresses EPO-induced STAT5 activation, possibly through a masking effect on STAT5 docking sites in EPOR. Suppresses PDGF-induced mitogenesis. Involved in stimulation of glucose uptake by insulin. Involved in coupling from immunoreceptor to Ras signaling. Acts as a negative regulator of cytokine signaling in collaboration with CBL. Induces cytoskeletal reorganization and neurite outgrowth in cultured neurons. In Rattus norvegicus (Rat), this protein is SH2B adapter protein 2 (Sh2b2).